The chain runs to 612 residues: Dihydroxy-acid dehydratase (612 aa).

Residue Asp-81 coordinates Mg(2+). Cys-122 is a [2Fe-2S] cluster binding site. Residues Asp-123 and Lys-124 each coordinate Mg(2+). Lys-124 carries the N6-carboxylysine modification. Cys-195 provides a ligand contact to [2Fe-2S] cluster. Glu-491 is a binding site for Mg(2+). Catalysis depends on Ser-517, which acts as the Proton acceptor.

The protein belongs to the IlvD/Edd family. Homodimer. Requires [2Fe-2S] cluster as cofactor. It depends on Mg(2+) as a cofactor.

The enzyme catalyses (2R)-2,3-dihydroxy-3-methylbutanoate = 3-methyl-2-oxobutanoate + H2O. The catalysed reaction is (2R,3R)-2,3-dihydroxy-3-methylpentanoate = (S)-3-methyl-2-oxopentanoate + H2O. It participates in amino-acid biosynthesis; L-isoleucine biosynthesis; L-isoleucine from 2-oxobutanoate: step 3/4. Its pathway is amino-acid biosynthesis; L-valine biosynthesis; L-valine from pyruvate: step 3/4. Functionally, functions in the biosynthesis of branched-chain amino acids. Catalyzes the dehydration of (2R,3R)-2,3-dihydroxy-3-methylpentanoate (2,3-dihydroxy-3-methylvalerate) into 2-oxo-3-methylpentanoate (2-oxo-3-methylvalerate) and of (2R)-2,3-dihydroxy-3-methylbutanoate (2,3-dihydroxyisovalerate) into 2-oxo-3-methylbutanoate (2-oxoisovalerate), the penultimate precursor to L-isoleucine and L-valine, respectively. The sequence is that of Dihydroxy-acid dehydratase from Haemophilus influenzae (strain PittEE).